The chain runs to 156 residues: MPRKGHIAKREVAPDPVYGSTLVTKFVNSMMWGGKKSTAQGIFYSAMTNLEQKGGDEAIKLFKKAVENCKPLLEVKTRRVGGANYQVPVEVNPERRTSLAIRWLVSYGRARGEKGMIEKLTNELLDAANGRGAAMKKKEDVHRMAEANKAFAHYRW.

Belongs to the universal ribosomal protein uS7 family. Part of the 30S ribosomal subunit. Contacts proteins S9 and S11.

Functionally, one of the primary rRNA binding proteins, it binds directly to 16S rRNA where it nucleates assembly of the head domain of the 30S subunit. Is located at the subunit interface close to the decoding center, probably blocks exit of the E-site tRNA. The polypeptide is Small ribosomal subunit protein uS7 (Acidobacterium capsulatum (strain ATCC 51196 / DSM 11244 / BCRC 80197 / JCM 7670 / NBRC 15755 / NCIMB 13165 / 161)).